A 173-amino-acid polypeptide reads, in one-letter code: Large ribosomal subunit protein uL10 (173 aa).

This sequence belongs to the universal ribosomal protein uL10 family. Part of the ribosomal stalk of the 50S ribosomal subunit. The N-terminus interacts with L11 and the large rRNA to form the base of the stalk. The C-terminus forms an elongated spine to which L12 dimers bind in a sequential fashion forming a multimeric L10(L12)X complex.

Its function is as follows. Forms part of the ribosomal stalk, playing a central role in the interaction of the ribosome with GTP-bound translation factors. The polypeptide is Large ribosomal subunit protein uL10 (Chlorobaculum parvum (strain DSM 263 / NCIMB 8327) (Chlorobium vibrioforme subsp. thiosulfatophilum)).